The chain runs to 42 residues: Aryl-alcohol dehydrogenase (42 aa).

Belongs to the zinc-containing alcohol dehydrogenase family. As to quaternary structure, homodimer. Zn(2+) is required as a cofactor.

It carries out the reaction an aromatic primary alcohol + NAD(+) = an aromatic aldehyde + NADH + H(+). In terms of biological role, oxidizes primary alcohols with an aromatic or cyclohex-1-ene ring. It is highly specific for benzyl alcohol. The chain is Aryl-alcohol dehydrogenase from Acinetobacter guillouiae (Acinetobacter genomosp. 11).